The chain runs to 346 residues: MSEAYKNAGVDIEAGYEAVKRMKKHVERTKRLGVMGSLGGFGGMFDLSELSYQKPVLISGTDGVGTKLKLAFSMDKHDTIGVDAVAMCVNDVLAQGAEPLFFLDYLAVGKADPVKIEQIVQGVAEGCEQSGSALVGGETAEMPGLYTADEYDIAGFSVGVAEKDEIVTGEKIEEGHLLIGLSSSGLHSNGFSLVRKVLLDDAELDLDTTYEPFERPLGEELLEPTRIYVKPVLAAVKSGKIDGMAHVTGGGFIENIPRMLPEGLSAEIDHGSWPIPPIFSFLQEYGKLKEEDMFNVFNMGIGFVLAVKEEHLTDVIGTLESHGEKAYLIGRVKKGEGVTFGGAALS.

This sequence belongs to the AIR synthase family.

Its subcellular location is the cytoplasm. It carries out the reaction 2-formamido-N(1)-(5-O-phospho-beta-D-ribosyl)acetamidine + ATP = 5-amino-1-(5-phospho-beta-D-ribosyl)imidazole + ADP + phosphate + H(+). Its pathway is purine metabolism; IMP biosynthesis via de novo pathway; 5-amino-1-(5-phospho-D-ribosyl)imidazole from N(2)-formyl-N(1)-(5-phospho-D-ribosyl)glycinamide: step 2/2. The protein is Phosphoribosylformylglycinamidine cyclo-ligase (purM) of Bacillus subtilis (strain 168).